The sequence spans 285 residues: Energy-coupling factor transporter ATP-binding protein EcfA2 (285 aa).

One can recognise an ABC transporter domain in the interval 3-245; sequence INFEQVNFSY…DLVWFKTVAL (243 aa). Residue 40 to 47 participates in ATP binding; sequence GQTGSGKS. Residue Glu-171 is the Proton acceptor of the active site.

Belongs to the ABC transporter superfamily. Energy-coupling factor EcfA family. As to quaternary structure, forms a stable energy-coupling factor (ECF) transporter complex probably composed of 2 membrane-embedded substrate-binding proteins (S component), 2 ATP-binding proteins (A component) and 2 transmembrane proteins (T component). This complex interacts with a number of substrate-specific components, including FolT, PanT and RibU for 5-formyltetrahydrofolate, pantothenate and riboflavin respectively.

The protein localises to the cell membrane. Its function is as follows. ATP-binding (A) component of a common energy-coupling factor (ECF) ABC-transporter complex. Unlike classic ABC transporters this ECF transporter provides the energy necessary to transport a number of different substrates including 5-formyltetrahydrofolate, pantothenate and riboflavin. Expression of the complex plus FolT in E.coli allows 5-formyltetrahydrofolate uptake; 5-formyltetrahydrofolate is not taken up in the absence of FolT or the EcfA1A2T complex. This is Energy-coupling factor transporter ATP-binding protein EcfA2 from Leuconostoc mesenteroides subsp. mesenteroides (strain ATCC 8293 / DSM 20343 / BCRC 11652 / CCM 1803 / JCM 6124 / NCDO 523 / NBRC 100496 / NCIMB 8023 / NCTC 12954 / NRRL B-1118 / 37Y).